The chain runs to 415 residues: 26S proteasome regulatory subunit 6B (415 aa).

203–210 (GPPGCGKT) is an ATP binding site.

This sequence belongs to the AAA ATPase family.

The protein localises to the cytoplasm. The protein resides in the nucleus. The 26S proteasome is involved in the ATP-dependent degradation of ubiquitinated proteins. The regulatory (or ATPase) complex confers ATP dependency and substrate specificity to the 26S complex. This is 26S proteasome regulatory subunit 6B from Manduca sexta (Tobacco hawkmoth).